The chain runs to 115 residues: Large ribosomal subunit protein bL20 (115 aa).

It belongs to the bacterial ribosomal protein bL20 family.

Functionally, binds directly to 23S ribosomal RNA and is necessary for the in vitro assembly process of the 50S ribosomal subunit. It is not involved in the protein synthesizing functions of that subunit. The protein is Large ribosomal subunit protein bL20 of Parasynechococcus marenigrum (strain WH8102).